The following is a 156-amino-acid chain: ATP synthase subunit b (156 aa).

Residues 7–29 (LLGQAISFGMFVWFCMKYVWPPI) form a helical membrane-spanning segment.

The protein belongs to the ATPase B chain family. F-type ATPases have 2 components, F(1) - the catalytic core - and F(0) - the membrane proton channel. F(1) has five subunits: alpha(3), beta(3), gamma(1), delta(1), epsilon(1). F(0) has three main subunits: a(1), b(2) and c(10-14). The alpha and beta chains form an alternating ring which encloses part of the gamma chain. F(1) is attached to F(0) by a central stalk formed by the gamma and epsilon chains, while a peripheral stalk is formed by the delta and b chains.

Its subcellular location is the cell inner membrane. F(1)F(0) ATP synthase produces ATP from ADP in the presence of a proton or sodium gradient. F-type ATPases consist of two structural domains, F(1) containing the extramembraneous catalytic core and F(0) containing the membrane proton channel, linked together by a central stalk and a peripheral stalk. During catalysis, ATP synthesis in the catalytic domain of F(1) is coupled via a rotary mechanism of the central stalk subunits to proton translocation. Its function is as follows. Component of the F(0) channel, it forms part of the peripheral stalk, linking F(1) to F(0). This chain is ATP synthase subunit b, found in Vibrio cholerae serotype O1 (strain ATCC 39541 / Classical Ogawa 395 / O395).